The sequence spans 67 residues: MPKLKTKSSVKKRFKITATGKVLAGPGKKRHNLSARSQKAKRQNRGSQVLTHADGLTVKQWAPYGLN.

Positions 22 to 52 (VLAGPGKKRHNLSARSQKAKRQNRGSQVLTH) are disordered. Positions 27-44 (GKKRHNLSARSQKAKRQN) are enriched in basic residues.

This sequence belongs to the bacterial ribosomal protein bL35 family.

The protein is Large ribosomal subunit protein bL35 of Granulibacter bethesdensis (strain ATCC BAA-1260 / CGDNIH1).